A 358-amino-acid chain; its full sequence is Aminomethyltransferase (358 aa).

This sequence belongs to the GcvT family. The glycine cleavage system is composed of four proteins: P, T, L and H.

It carries out the reaction N(6)-[(R)-S(8)-aminomethyldihydrolipoyl]-L-lysyl-[protein] + (6S)-5,6,7,8-tetrahydrofolate = N(6)-[(R)-dihydrolipoyl]-L-lysyl-[protein] + (6R)-5,10-methylene-5,6,7,8-tetrahydrofolate + NH4(+). The glycine cleavage system catalyzes the degradation of glycine. The chain is Aminomethyltransferase from Francisella tularensis subsp. tularensis (strain FSC 198).